A 276-amino-acid polypeptide reads, in one-letter code: Palmitoyltransferase ZDHHC22 (276 aa).

The Cytoplasmic segment spans residues 1-9 (MGKLKLLNT). Residues 10–30 (IAPAYFYAATVVTFALHFLLF) form a helical membrane-spanning segment. The Lumenal segment spans residues 31-45 (TPTIFQSSDVTINPA). The helical transmembrane segment at 46-66 (MLAHISIFLFLMGNALGNYIM) threads the bilayer. At 67–131 (TIRNPSESAN…NCIGNRNMRY (65 aa)) the chain is on the cytoplasmic side. Residues 101–137 (HFCKVCKKVILKRDHHCFFTGNCIGNRNMRYFIMFSI) enclose the DHHC domain. The active-site S-palmitoyl cysteine intermediate is the Cys-117. Residues 132 to 152 (FIMFSIYTSSSCLYSLVIGVA) traverse the membrane as a helical segment. Residues 153–165 (YLTIEYSISFENP) lie on the Lumenal side of the membrane. A helical membrane pass occupies residues 166-186 (LTFLTLLPLSTGYFFLGLISG). The Cytoplasmic portion of the chain corresponds to 187–188 (LQ). Residues 189-209 (FFLVIMLYIWLGIGLVSVGFC) form a helical membrane-spanning segment. Over 210–276 (CQQLLLVARG…WQVYHDHKHD (67 aa)) the chain is Lumenal.

It belongs to the DHHC palmitoyltransferase family.

It localises to the endoplasmic reticulum membrane. Its subcellular location is the golgi apparatus membrane. The catalysed reaction is L-cysteinyl-[protein] + hexadecanoyl-CoA = S-hexadecanoyl-L-cysteinyl-[protein] + CoA. In terms of biological role, palmitoyltransferase that could catalyze the addition of palmitate onto various protein substrates and be involved in a variety of cellular processes. The sequence is that of Palmitoyltransferase ZDHHC22 (zdhhc22) from Danio rerio (Zebrafish).